We begin with the raw amino-acid sequence, 103 residues long: Acylphosphatase-2 (103 aa).

Serine 2 carries the N-acetylserine modification. In terms of domain architecture, Acylphosphatase-like spans 13–103 (SVDYEVFGRV…LDFSGFSTRY (91 aa)). Active-site residues include arginine 28 and asparagine 46.

Belongs to the acylphosphatase family.

The enzyme catalyses an acyl phosphate + H2O = a carboxylate + phosphate + H(+). Its physiological role is not yet clear. The chain is Acylphosphatase-2 (ACYP2) from Anas platyrhynchos (Mallard).